Consider the following 253-residue polypeptide: 5'-nucleotidase SurE (253 aa).

A divalent metal cation is bound by residues D8, D9, S40, and N93.

Belongs to the SurE nucleotidase family. It depends on a divalent metal cation as a cofactor.

The protein localises to the cytoplasm. The enzyme catalyses a ribonucleoside 5'-phosphate + H2O = a ribonucleoside + phosphate. Functionally, nucleotidase that shows phosphatase activity on nucleoside 5'-monophosphates. The chain is 5'-nucleotidase SurE from Methylobacterium sp. (strain 4-46).